The primary structure comprises 1083 residues: Glutamate receptor-interacting protein 2 (1083 aa).

PDZ domains follow at residues 58 to 141, 156 to 244, and 258 to 342; these read IVEL…EYEL, TIEI…EYDV, and LVEI…LPAH. Polar residues predominate over residues 408 to 422; sequence AGTPGFSSQNSNTLP. The segment at 408–460 is disordered; it reads AGTPGFSSQNSNTLPRTVHPMSPRTTMNRRRQKRKDHKSSLSLASSTVGPGGQ. Basic residues predominate over residues 434 to 444; that stretch reads MNRRRQKRKDH. 3 consecutive PDZ domains span residues 468–555, 569–652, and 667–749; these read EIIL…EIEF, HVKL…RKDE, and TVEL…KKQT. 3 disordered regions span residues 754–783, 853–872, and 936–965; these read PQRLSDSMNEGSDPEDDLTDSQKTSKLSEI, NEQDWEKPTRYPSQPNGLET, and GSHHISSNSPKKENKLSQDARSKKEEVHNA. Positions 774-783 are enriched in polar residues; the sequence is SQKTSKLSEI. The span at 945 to 963 shows a compositional bias: basic and acidic residues; the sequence is PKKENKLSQDARSKKEEVH. Residues 974–1056 enclose the PDZ 7 domain; it reads KVTVQKDMDT…RLDLVISRGL (83 aa).

It belongs to the GRIP2 family. Enriched in the mitochondrial cloud of stage I oocytes, before becoming concentrated at the tip of the vegetal cortex in stage II oocytes. Expression becomes localized to the germ plasm of stage III-IV oocytes and early cleavage stages. At the tailbud stage, localizes to the migrating primordial germ cells (PGCs) until PGC migration is complete (stage 40), at which point expression disappears. In the adult, expressed in the brain, ovary, eye, muscle, spinal cord and very weakly in adipocytes.

It localises to the cytoplasm. Functionally, plays an important role in primordial germ cell (PGC) maintenance and efficiency of PGC migration. The protein is Glutamate receptor-interacting protein 2 of Xenopus laevis (African clawed frog).